Consider the following 163-residue polypeptide: 3-isopropylmalate dehydratase small subunit (163 aa).

The protein belongs to the LeuD family. LeuD type 2 subfamily. As to quaternary structure, heterodimer of LeuC and LeuD.

The catalysed reaction is (2R,3S)-3-isopropylmalate = (2S)-2-isopropylmalate. It participates in amino-acid biosynthesis; L-leucine biosynthesis; L-leucine from 3-methyl-2-oxobutanoate: step 2/4. Catalyzes the isomerization between 2-isopropylmalate and 3-isopropylmalate, via the formation of 2-isopropylmaleate. The chain is 3-isopropylmalate dehydratase small subunit from Clostridioides difficile (strain 630) (Peptoclostridium difficile).